Reading from the N-terminus, the 141-residue chain is Nucleoside diphosphate kinase (141 aa).

Lysine 11, phenylalanine 59, arginine 87, threonine 93, arginine 104, and asparagine 114 together coordinate ATP. The active-site Pros-phosphohistidine intermediate is histidine 117.

This sequence belongs to the NDK family. In terms of assembly, homotetramer. Requires Mg(2+) as cofactor.

The protein resides in the cytoplasm. It carries out the reaction a 2'-deoxyribonucleoside 5'-diphosphate + ATP = a 2'-deoxyribonucleoside 5'-triphosphate + ADP. The enzyme catalyses a ribonucleoside 5'-diphosphate + ATP = a ribonucleoside 5'-triphosphate + ADP. In terms of biological role, major role in the synthesis of nucleoside triphosphates other than ATP. The ATP gamma phosphate is transferred to the NDP beta phosphate via a ping-pong mechanism, using a phosphorylated active-site intermediate. This chain is Nucleoside diphosphate kinase, found in Burkholderia multivorans (strain ATCC 17616 / 249).